A 1058-amino-acid polypeptide reads, in one-letter code: Translation initiation factor IF-2 (1058 aa).

Over residues 1 to 12 (MNDTKTPGDKTL) the composition is skewed to basic and acidic residues. The segment at 1–468 (MNDTKTPGDK…MTGHRGMQES (468 aa)) is disordered. A compositionally biased stretch (low complexity) spans 54–81 (APGEAGAPSGTPAAAPAATPAPAAAAPR). The span at 82–95 (PATPAPAAPRPAAP) shows a compositional bias: pro residues. The segment covering 96-108 (ATPAQPAAEAKAP) has biased composition (low complexity). Pro residues predominate over residues 109–119 (APAPTPAPAAP). 2 stretches are compositionally biased toward low complexity: residues 120–156 (AAPVAEAPKVEAPAPVAAKPEAAPAAPVAEAPKVEVP) and 164–228 (EPVA…QRPG). A compositionally biased stretch (gly residues) spans 244 to 271 (RSGGPGSDRRGGPGGQNRPGQNRQGGSG). The span at 292–364 (ARVREVEERR…ARKRFGEETG (73 aa)) shows a compositional bias: basic and acidic residues. A compositionally biased stretch (low complexity) spans 368–396 (GASAPSTSTARPLTPRPAGTTTTTGAPAA). A compositionally biased stretch (basic residues) spans 452–461 (FRRRTQRMTG). A tr-type G domain is found at 555 to 725 (PRPPVVTIMG…SLQSEVLDLK (171 aa)). Positions 564-571 (GHVDHGKT) are G1. 564–571 (GHVDHGKT) contributes to the GTP binding site. The tract at residues 589–593 (GITQH) is G2. The segment at 611–614 (DTPG) is G3. Residues 611–615 (DTPGH) and 665–668 (NKID) each bind GTP. Residues 665–668 (NKID) are G4. Residues 701–703 (SAT) form a G5 region.

This sequence belongs to the TRAFAC class translation factor GTPase superfamily. Classic translation factor GTPase family. IF-2 subfamily.

The protein resides in the cytoplasm. In terms of biological role, one of the essential components for the initiation of protein synthesis. Protects formylmethionyl-tRNA from spontaneous hydrolysis and promotes its binding to the 30S ribosomal subunits. Also involved in the hydrolysis of GTP during the formation of the 70S ribosomal complex. The polypeptide is Translation initiation factor IF-2 (Azorhizobium caulinodans (strain ATCC 43989 / DSM 5975 / JCM 20966 / LMG 6465 / NBRC 14845 / NCIMB 13405 / ORS 571)).